The sequence spans 593 residues: FAD-binding monooxygenase acrE (593 aa).

Residues 61-64, 73-74, and tyrosine 79 contribute to the FAD site; these read TWRF and DS. Residue 71-73 participates in NADP(+) binding; that stretch reads RVD. Residues 200–206 and 223–224 contribute to the NADP(+) site; these read TGASGVQ and RS.

The protein belongs to the FAD-binding monooxygenase family. FAD serves as cofactor.

Its pathway is secondary metabolite biosynthesis. Functionally, FAD-binding monooxygenase; part of the cluster that mediates the biosynthesis of acurin A, a highly reduced polyketide coupled to a serine via a peptide bond. The activities of the highly reducing polyketide synthase acrA and the nonribosomal peptide synthetase acrB are collectively responsible for the synthesis of the acurin A core structure with a heptaketide backbone produced by acrA covalently fused to a L-serine by acrB. After the formation of the PK-NRP hybrid product, it is detached from acrB by reductive release to set up the formation of the lactam ring by aldol condensation. The hydrolyase acrC then catalyzes water loss to generate a double bond in the ring. This double bond is probably reduced, which is followed by three oxidations at C-22 to generate the carboxylic acid moiety, involving probably the FAD-binding monooxygenase acrE and the cytochrome P450 monooxygenases acrD and acrF. Finally, a last methylation step performed by the O-methyltransferase acrG leads to the production of acurin A. The protein is FAD-binding monooxygenase acrE of Aspergillus aculeatus (strain ATCC 16872 / CBS 172.66 / WB 5094).